The following is a 463-amino-acid chain: Chromosomal replication initiator protein DnaA (463 aa).

A domain I, interacts with DnaA modulators region spans residues 1 to 83; it reads MSTNQIILTD…LQLFQHYNNT (83 aa). The tract at residues 83 to 124 is domain II; sequence TIKSIEIITKELPGTTQTVIELPTKTFADIGSSELNSENIFS. Positions 125-343 are domain III, AAA+ region; it reads TLDVRFTFDN…GALNKVIAHS (219 aa). Positions 171, 173, 174, and 175 each coordinate ATP. The tract at residues 344-463 is domain IV, binds dsDNA; the sequence is NFTLKEITLE…INLLMKILQN (120 aa).

Belongs to the DnaA family. As to quaternary structure, oligomerizes as a right-handed, spiral filament on DNA at oriC.

The protein localises to the cytoplasm. Plays an essential role in the initiation and regulation of chromosomal replication. ATP-DnaA binds to the origin of replication (oriC) to initiate formation of the DNA replication initiation complex once per cell cycle. Binds the DnaA box (a 9 base pair repeat at the origin) and separates the double-stranded (ds)DNA. Forms a right-handed helical filament on oriC DNA; dsDNA binds to the exterior of the filament while single-stranded (ss)DNA is stabiized in the filament's interior. The ATP-DnaA-oriC complex binds and stabilizes one strand of the AT-rich DNA unwinding element (DUE), permitting loading of DNA polymerase. After initiation quickly degrades to an ADP-DnaA complex that is not apt for DNA replication. Binds acidic phospholipids. This chain is Chromosomal replication initiator protein DnaA, found in Rickettsia felis (strain ATCC VR-1525 / URRWXCal2) (Rickettsia azadi).